The chain runs to 197 residues: MRKADIVRETKETRVALTVDLDGTGRSAISTGIGFLDHMLDLLARHARFDLEIKADGDLHVDFHHTTEDVGIVLGQALKKALGDMRGITRYADVLLPMDETLTRVALDISGRPFLVFRTEFAVPKIGEFDTELVREFFQAFASSAGVTLHVETLYGVNAHHIAESCFKGLARVLRAAVAVDPAAAGEIPSTKGALGT.

This sequence belongs to the imidazoleglycerol-phosphate dehydratase family.

It is found in the cytoplasm. It catalyses the reaction D-erythro-1-(imidazol-4-yl)glycerol 3-phosphate = 3-(imidazol-4-yl)-2-oxopropyl phosphate + H2O. It participates in amino-acid biosynthesis; L-histidine biosynthesis; L-histidine from 5-phospho-alpha-D-ribose 1-diphosphate: step 6/9. The chain is Imidazoleglycerol-phosphate dehydratase from Xanthobacter autotrophicus (strain ATCC BAA-1158 / Py2).